We begin with the raw amino-acid sequence, 167 residues long: Caltractin (167 aa).

The span at 1–18 shows a compositional bias: basic residues; sequence MSSARTVRKDKPRGRHHG. Residues 1–23 form a disordered region; sequence MSSARTVRKDKPRGRHHGLTQQK. EF-hand domains follow at residues 22-57, 58-93, 95-130, and 131-166; these read QKRQEIKEAFELFDTDGSGTIDAKELNVAMRALGFE, MTEEQINQMIADVDKDGSGAIDFDEFCHMMTAKIGE, DTKEELMKAFRIIDQDNNGKISPEDIQRIAKELGEN, and FTVKDIQDMIEEADRDRDGEVNVEEFLRMMKRTSYA. Residues aspartate 35, aspartate 37, serine 39, threonine 41, glutamate 46, aspartate 71, aspartate 73, serine 75, glutamate 82, aspartate 108, aspartate 110, asparagine 112, lysine 114, aspartate 119, aspartate 144, aspartate 146, aspartate 148, glutamate 150, and glutamate 155 each coordinate Ca(2+).

The protein belongs to the centrin family.

The protein resides in the cytoplasm. Its subcellular location is the cytoskeleton. The protein localises to the microtubule organizing center. Plays a fundamental role in microtubule-organizing center structure and function. The sequence is that of Caltractin from Atriplex nummularia (Old man saltbush).